The sequence spans 243 residues: Phosphoribosyl isomerase A (243 aa).

The active-site Proton acceptor is the Asp-10. The active-site Proton donor is Asp-129.

The protein belongs to the HisA/HisF family.

It localises to the cytoplasm. It catalyses the reaction 1-(5-phospho-beta-D-ribosyl)-5-[(5-phospho-beta-D-ribosylamino)methylideneamino]imidazole-4-carboxamide = 5-[(5-phospho-1-deoxy-D-ribulos-1-ylimino)methylamino]-1-(5-phospho-beta-D-ribosyl)imidazole-4-carboxamide. The catalysed reaction is N-(5-phospho-beta-D-ribosyl)anthranilate = 1-(2-carboxyphenylamino)-1-deoxy-D-ribulose 5-phosphate. Its pathway is amino-acid biosynthesis; L-histidine biosynthesis; L-histidine from 5-phospho-alpha-D-ribose 1-diphosphate: step 4/9. It functions in the pathway amino-acid biosynthesis; L-tryptophan biosynthesis; L-tryptophan from chorismate: step 3/5. Functionally, involved in both the histidine and tryptophan biosynthetic pathways. The sequence is that of Phosphoribosyl isomerase A from Mycobacteroides abscessus (strain ATCC 19977 / DSM 44196 / CCUG 20993 / CIP 104536 / JCM 13569 / NCTC 13031 / TMC 1543 / L948) (Mycobacterium abscessus).